Here is a 3925-residue protein sequence, read N- to C-terminus: Polyketide synthase ThaH (3925 aa).

Residues 1 to 56 are disordered; sequence MPRWRPTWLKRLSCPKQPRHPTHPKHPTHPKHPKHPKHPRHPKHPRISRRCSSASA. Residues 17–49 are compositionally biased toward basic residues; the sequence is QPRHPTHPKHPTHPKHPKHPKHPRHPKHPRISR. The region spanning 1073-1148 is the Carrier 1 domain; sequence GLVGGLEGEV…DIAGYIASAE (76 aa). Position 1108 is an O-(pantetheine 4'-phosphoryl)serine (Ser1108). Residues 1166–1182 show a composition bias toward low complexity; it reads AAVATPPGRPAGEAAGA. A disordered region spans residues 1166–1233; it reads AAVATPPGRP…GEPARAASHG (68 aa). Positions 1183–1196 are enriched in basic and acidic residues; sequence QRDRAPRAADERAD. The segment covering 1202 to 1216 has biased composition (low complexity); sequence PSDAHASKAAAIDSR. Residues 1237-1667 form the Ketosynthase family 3 (KS3) 1 domain; sequence ADGLAIIGIA…GTNAHALVEA (431 aa). Residues Cys1413, His1549, and His1589 each act as for beta-ketoacyl synthase 1 activity in the active site. Residues 1679–1698 form a disordered region; that stretch reads GATGAPDVPDAPDAPDAPDA. The tract at residues 1844–1969 is N-terminal hotdog fold; that stretch reads HPLLHRNVST…GHVQRIAEPA (126 aa). In terms of domain architecture, PKS/mFAS DH spans 1844 to 2143; sequence HPLLHRNVST…ARRFVREPAR (300 aa). The active-site Proton acceptor; for dehydratase activity is His1873. The tract at residues 1983–2143 is C-terminal hotdog fold; that stretch reads AAPRLSAARC…ARRFVREPAR (161 aa). The Proton donor; for dehydratase activity role is filled by Asp2043. 2 stretches are compositionally biased toward low complexity: residues 2594-2607 and 2632-2646; these read DDPA…AASS and PAAA…ASDA. Disordered stretches follow at residues 2594–2613 and 2619–2657; these read DDPA…LPEM and APAD…AAPA. In terms of domain architecture, Carrier 2 spans 2664-2737; the sequence is EHALALLKRL…ELACYFVAHH (74 aa). Residue Ser2698 is modified to O-(pantetheine 4'-phosphoryl)serine. Over residues 2753-2768 the composition is skewed to low complexity; sequence LAPAPAQPLAPRAPSA. The disordered stretch occupies residues 2753-2841; the sequence is LAPAPAQPLA…AHAPAQASAP (89 aa). Over residues 2770–2779 the composition is skewed to basic and acidic residues; the sequence is PARDAARSLE. Low complexity-rich tracts occupy residues 2789-2813 and 2823-2841; these read GQEP…QASA and ETRT…ASAP. In terms of domain architecture, Ketosynthase family 3 (KS3) 2 spans 2847–3286; that stretch reads AFDIAIVGLA…GSNAHLIVEE (440 aa). Catalysis depends on for beta-ketoacyl synthase 2 activity residues Cys3022, His3157, and His3197. Low complexity-rich tracts occupy residues 3512–3524 and 3578–3592; these read ASTA…PSPA and AAAA…SSPS. Disordered stretches follow at residues 3512–3531 and 3578–3619; these read ASTA…STGE and AAAA…AAPD. The span at 3593–3603 shows a compositional bias: pro residues; sequence PSSPSPLPSSP. Over residues 3604-3619 the composition is skewed to low complexity; that stretch reads PRMSSRQHASPAAAPD. The region spanning 3622–3699 is the Carrier 3 domain; the sequence is AALLDIEAFL…AMARHVSSNA (78 aa). At Ser3659 the chain carries O-(pantetheine 4'-phosphoryl)serine. Positions 3734 to 3754 are disordered; it reads PAPFASAAPPEPPASPARADG. The region spanning 3762 to 3839 is the Carrier 4 domain; the sequence is TSLDAIRAHL…ALARFVGTQL (78 aa). The residue at position 3799 (Ser3799) is an O-(pantetheine 4'-phosphoryl)serine.

The protein belongs to the ATP-dependent AMP-binding enzyme family. Requires pantetheine 4'-phosphate as cofactor.

It is found in the cytoplasm. It participates in antibiotic biosynthesis. Its function is as follows. Involved in production of the polyketide antibiotic thailandamide. This Burkholderia thailandensis (strain ATCC 700388 / DSM 13276 / CCUG 48851 / CIP 106301 / E264) protein is Polyketide synthase ThaH.